The chain runs to 105 residues: Antitoxin HigA-1 (105 aa).

In terms of domain architecture, HTH cro/C1-type spans 15–69 (LKVEFLEPMGITSKALAEAMGVHRNTVSNLINGGVLTAPVAIKLAAALGNTPEFW). Positions 27–46 (SKALAEAMGVHRNTVSNLIN) form a DNA-binding region, H-T-H motif.

Its function is as follows. Antitoxin component of a type II toxin-antitoxin (TA) system that counteracts the effect of the HigB-1 toxin. Binds to its own promoter and regulates transcription of the higB-1/higA-1 operon. This is Antitoxin HigA-1 (higA-1) from Vibrio cholerae serotype O1 (strain ATCC 39315 / El Tor Inaba N16961).